The sequence spans 649 residues: Ubiquitin-associated and SH3 domain-containing protein B (649 aa).

S20 is subject to Phosphoserine. A Phosphothreonine modification is found at T23. One can recognise a UBA domain in the interval 27 to 76 (NRQQRPGTIKHGSALDVLLSMGFPRARAQKALASTGGRSVQAACDWLFSH). Positions 254–319 (ANHETLQVIY…PENYITKADE (66 aa)) constitute an SH3 domain. A protein tyrosine phosphatase region spans residues 380–649 (GPQKRCLFVC…FNWRETLLQE (270 aa)). R390 is a catalytic residue. H391 acts as the Tele-phosphohistidine intermediate in catalysis. H576 is an active-site residue.

As to quaternary structure, homodimer. Interacts with JAK2 (in vitro). Interacts with CBL. Part of a complex containing CBL and activated EGFR. Interacts with ubiquitin and with mono-ubiquitinated proteins. Interacts with ZAP70 (ubiquitinated form).

It is found in the cytoplasm. The protein localises to the nucleus. It catalyses the reaction O-phospho-L-tyrosyl-[protein] + H2O = L-tyrosyl-[protein] + phosphate. Interferes with CBL-mediated down-regulation and degradation of receptor-type tyrosine kinases. Promotes accumulation of activated target receptors, such as T-cell receptors and EGFR, on the cell surface. Exhibits tyrosine phosphatase activity toward several substrates including EGFR, FAK, SYK, and ZAP70. Down-regulates proteins that are dually modified by both protein tyrosine phosphorylation and ubiquitination. The polypeptide is Ubiquitin-associated and SH3 domain-containing protein B (UBASH3B) (Homo sapiens (Human)).